The sequence spans 653 residues: Macrolide export ATP-binding/permease protein MacB (653 aa).

One can recognise an ABC transporter domain in the interval 6-244 (LALSHICREF…AAASLPADKP (239 aa)). 42-49 (GSSGSGKS) provides a ligand contact to ATP. Transmembrane regions (helical) follow at residues 277 to 297 (FLTM…VALG), 526 to 546 (LAFL…IGVM), 587 to 607 (LGGI…NLLL), and 617 to 637 (FSIG…GYFP).

This sequence belongs to the ABC transporter superfamily. Macrolide exporter (TC 3.A.1.122) family. As to quaternary structure, homodimer.

The protein resides in the cell inner membrane. Non-canonical ABC transporter that contains transmembrane domains (TMD), which form a pore in the inner membrane, and an ATP-binding domain (NBD), which is responsible for energy generation. Confers resistance against macrolides. The chain is Macrolide export ATP-binding/permease protein MacB from Bradyrhizobium diazoefficiens (strain JCM 10833 / BCRC 13528 / IAM 13628 / NBRC 14792 / USDA 110).